Here is a 733-residue protein sequence, read N- to C-terminus: Tyrosine-protein kinase ptk (733 aa).

Helical transmembrane passes span 19 to 39 (LFFSLIAQWKLIALCIILSLI) and 438 to 458 (LQILILSIFLGGFLGTLLALL). 542–550 (GPAPEVGKS) provides a ligand contact to ATP.

It belongs to the etk/wzc family. Mg(2+) serves as cofactor. Requires Mn(2+) as cofactor. Autophosphorylated on several Tyr residues. Dephosphorylated by ptp.

It is found in the cell inner membrane. The enzyme catalyses L-tyrosyl-[protein] + ATP = O-phospho-L-tyrosyl-[protein] + ADP + H(+). Its pathway is glycan metabolism; exopolysaccharide biosynthesis. Its function is as follows. May be involved in the production and the transport of exopolysaccharides. This Acinetobacter johnsonii protein is Tyrosine-protein kinase ptk (ptk).